We begin with the raw amino-acid sequence, 395 residues long: Chaperone protein DnaJ (395 aa).

The region spanning 4–69 (DYYEVLGVGR…DKRRRYDQFG (66 aa)) is the J domain. The CR-type zinc-finger motif lies at 152-233 (GVEKTLKIKK…CHGEGIKQGE (82 aa)). Zn(2+)-binding residues include C165, C168, C181, C184, C207, C210, C221, and C224. 4 CXXCXGXG motif repeats span residues 165-172 (CDVCNGTG), 181-188 (CPTCQGTG), 207-214 (CPTCGGEG), and 221-228 (CTACHGEG).

It belongs to the DnaJ family. Homodimer. The cofactor is Zn(2+).

It is found in the cytoplasm. Its function is as follows. Participates actively in the response to hyperosmotic and heat shock by preventing the aggregation of stress-denatured proteins and by disaggregating proteins, also in an autonomous, DnaK-independent fashion. Unfolded proteins bind initially to DnaJ; upon interaction with the DnaJ-bound protein, DnaK hydrolyzes its bound ATP, resulting in the formation of a stable complex. GrpE releases ADP from DnaK; ATP binding to DnaK triggers the release of the substrate protein, thus completing the reaction cycle. Several rounds of ATP-dependent interactions between DnaJ, DnaK and GrpE are required for fully efficient folding. Also involved, together with DnaK and GrpE, in the DNA replication of plasmids through activation of initiation proteins. The polypeptide is Chaperone protein DnaJ (Prosthecochloris aestuarii (strain DSM 271 / SK 413)).